A 215-amino-acid polypeptide reads, in one-letter code: MDFYYMPGGGGCRTVIMVAKALGLELNKKLLNTMEGEQLKPEFVKLNPQHTIPTLVDNGFSIWESRAIAVYLVEKYGKDDYLLPNDPKKRAVINQRLYFDMGTLYESFAKYYYPLFRTGKPGSDEDLKRIETAFGFLDTFLEGQEYVAGDQLTVADIAILSTVSTFEVSEFDFSKYSNVSRWYDNAKKVTPGWDENWEGLMAMKALFDARKLAAK.

The GST N-terminal domain maps to 1–80; sequence MDFYYMPGGG…YLVEKYGKDD (80 aa). Glutathione-binding positions include 50 to 52 and 64 to 66; these read HTI and ESR. In terms of domain architecture, GST C-terminal spans 86-212; that stretch reads DPKKRAVINQ…MKALFDARKL (127 aa).

Belongs to the GST superfamily. Delta family. Homodimer.

It carries out the reaction RX + glutathione = an S-substituted glutathione + a halide anion + H(+). In terms of biological role, conjugation of reduced glutathione to a wide number of exogenous and endogenous hydrophobic electrophiles. May be involved in detoxification. The polypeptide is Glutathione S-transferase D2 (Drosophila melanogaster (Fruit fly)).